The following is a 622-amino-acid chain: TAF6-like RNA polymerase II p300/CBP-associated factor-associated factor 65 kDa subunit 6L (622 aa).

2 disordered regions span residues 403-430 (QESS…GPED) and 457-546 (GTGQ…TRDV). Phosphoserine is present on residues serine 495 and serine 501. The span at 511–522 (ASASGPAASESR) shows a compositional bias: low complexity. Asymmetric dimethylarginine occurs at positions 555, 561, and 593.

It belongs to the TAF6 family. As to quaternary structure, the PCAF complex is composed of a number of TBP-associated factors (TAFS), such as TAF5, TAF5L, TAF6, TAF6L, TAF9, TAF10 and TAF12, PCAF, and also PCAF-associated factors (PAFs), such as TADA2L/ADA2, TADA3L/ADA3 and SPT3. Component of the STAGA transcription coactivator-HAT complex, at least composed of SUPT3H, GCN5L2, TAF5L, TAF6L, SUPT7L, TADA3L, TAD1L, TAF10, TAF12, TRRAP and TAF9.

It localises to the nucleus. Functionally, functions as a component of the PCAF complex. The PCAF complex is capable of efficiently acetylating histones in a nucleosomal context. The PCAF complex could be considered as the human version of the yeast SAGA complex. With TAF5L, acts as an epigenetic regulator essential for somatic reprogramming. Regulates target genes through H3K9ac deposition and MYC recruitment which trigger MYC regulatory network to orchestrate gene expression programs to control embryonic stem cell state. Functions with MYC to activate target gene expression through RNA polymerase II pause release. This is TAF6-like RNA polymerase II p300/CBP-associated factor-associated factor 65 kDa subunit 6L from Homo sapiens (Human).